Reading from the N-terminus, the 360-residue chain is Isopentenyl-diphosphate delta-isomerase (360 aa).

Residue 12–13 (RK) participates in substrate binding. Residues 69-71 (SMT), Ser-99, and Asn-130 contribute to the FMN site. 99-101 (SQR) is a substrate binding site. Position 164 (Gln-164) interacts with substrate. Residue Glu-165 participates in Mg(2+) binding. FMN is bound by residues Lys-196, Thr-226, 277 to 279 (GVR), and 298 to 299 (AK).

Belongs to the IPP isomerase type 2 family. Homooctamer. Dimer of tetramers. Requires FMN as cofactor. NADPH is required as a cofactor. The cofactor is Mg(2+).

Its subcellular location is the cytoplasm. It catalyses the reaction isopentenyl diphosphate = dimethylallyl diphosphate. In terms of biological role, involved in the biosynthesis of isoprenoids. Catalyzes the 1,3-allylic rearrangement of the homoallylic substrate isopentenyl (IPP) to its allylic isomer, dimethylallyl diphosphate (DMAPP). This chain is Isopentenyl-diphosphate delta-isomerase, found in Halobacterium salinarum (strain ATCC 700922 / JCM 11081 / NRC-1) (Halobacterium halobium).